Reading from the N-terminus, the 222-residue chain is ATP-dependent dethiobiotin synthetase BioD 2 (222 aa).

Residue Thr-17 participates in Mg(2+) binding. Lys-38 is an active-site residue. Thr-42 is a substrate binding site. Residues Asp-55 and Glu-112 each contribute to the Mg(2+) site. Residues Asp-55, 112–115, 172–173, 201–203, and Glu-208 contribute to the ATP site; these read EGCG, NR, and PYL.

This sequence belongs to the dethiobiotin synthetase family. Homodimer. Requires Mg(2+) as cofactor.

It localises to the cytoplasm. It carries out the reaction (7R,8S)-7,8-diammoniononanoate + CO2 + ATP = (4R,5S)-dethiobiotin + ADP + phosphate + 3 H(+). It functions in the pathway cofactor biosynthesis; biotin biosynthesis; biotin from 7,8-diaminononanoate: step 1/2. Its function is as follows. Catalyzes a mechanistically unusual reaction, the ATP-dependent insertion of CO2 between the N7 and N8 nitrogen atoms of 7,8-diaminopelargonic acid (DAPA, also called 7,8-diammoniononanoate) to form a ureido ring. The sequence is that of ATP-dependent dethiobiotin synthetase BioD 2 from Yersinia pestis.